We begin with the raw amino-acid sequence, 204 residues long: Nascent polypeptide-associated complex subunit alpha-like protein 3 (204 aa).

Over residues 1–23 (MTAEQKVELAAKLEEQKIDLDKP) the composition is skewed to basic and acidic residues. Disordered regions lie at residues 1–68 (MTAE…AMLK) and 141–165 (GETSSAATAAAVQDDDDEEVDEEGV). The span at 24-43 (EVEDDDDNDEDDSEDDDEAE) shows a compositional bias: acidic residues. Phosphoserine is present on serine 36. Positions 44–59 (GHDGEAGGRSKQSRSE) are enriched in basic and acidic residues. Positions 56 to 121 (SRSEKKSRKA…AKIEDLSSQL (66 aa)) constitute an NAC-A/B domain. The segment covering 141–152 (GETSSAATAAAV) has biased composition (low complexity). Residues 153 to 164 (QDDDDEEVDEEG) show a composition bias toward acidic residues. Residues 159-204 (EVDEEGVEPKDIELVMTQAGVSKPRAVKALKLANGDIVSAIMELTT) enclose the UBA domain.

This sequence belongs to the NAC-alpha family.

Functionally, may promote appropriate targeting of ribosome-nascent polypeptide complexes. This is Nascent polypeptide-associated complex subunit alpha-like protein 3 from Arabidopsis thaliana (Mouse-ear cress).